Here is a 258-residue protein sequence, read N- to C-terminus: Peptidase inhibitor 15 (258 aa).

Positions 1 to 19 (MIAISAVSSALLFSLLCEA) are cleaved as a signal peptide. A propeptide spanning residues 20–60 (STVVLLNSTDSSPPTNNFTDIEAALKAQLDSADIPKARRKR) is cleaved from the precursor. N-linked (GlcNAc...) asparagine glycans are attached at residues N26, N36, and N124. The region spanning 71–211 (LDYHNQVRGK…RRAVYLVCNY (141 aa)) is the SCP domain.

It belongs to the CRISP family. Post-translationally, N-glycosylated. Weakly expressed. Expressed at low level in prostate, mammary gland, salivary gland and thyroid gland.

It localises to the secreted. Functionally, serine protease inhibitor which displays weak inhibitory activity against trypsin. May play a role in facial patterning during embryonic development. This Homo sapiens (Human) protein is Peptidase inhibitor 15 (PI15).